The sequence spans 503 residues: MEEFQGYFELDRSRQHDFLYPLLFREYIYALAHDHGLNRSILFENAGYDKKSSSIIVKRLITRMYQQNPLIFSANDSIQNPFFGHNKNLYSQIISEGFAVIVEIPFSLRLVSSLERKEIAKSHNLRSIHSIFPFLEDKFSHLDYVSDVLIPYHIHLEISVQTLRYWVKDASSLHLLRFFLHEYWNSLITPKKHITLFSKGNPRLFLFLYNSHICEYESIFLFLRNQSSHLRSTSSGIFFERIYFYVKIEHFAKVFFDNDFQCILWFFKDPFMHYVRYQGKSILALKDTPLLMNKWKYYLVTLWQYHFYAWFQPGRIDINQLCKYSLDFLGYRSSVRLNSSVVRSQILENSFLINNAMKKFETIVPIIPLIGSLSKANFCNTLGHPISKPTRADSSDSDIIDRFLRICRNLSHYHSGSSKKKSLYRVKYILRLSCVKTLARKHKRTVRTFLKRLGSEFLEEFLTEEEVVLSLIFPRTYSTSRRLYRGQIWYFDITSINDLVNYE.

Belongs to the intron maturase 2 family. MatK subfamily.

It localises to the plastid. Its subcellular location is the chloroplast. In terms of biological role, usually encoded in the trnK tRNA gene intron. Probably assists in splicing its own and other chloroplast group II introns. In Syzygium anisatum (Aniseed myrtle), this protein is Maturase K.